We begin with the raw amino-acid sequence, 195 residues long: Glycerol-3-phosphate acyltransferase (195 aa).

A run of 5 helical transmembrane segments spans residues isoleucine 3–leucine 23, alanine 53–isoleucine 73, phenylalanine 80–phenylalanine 100, leucine 115–phenylalanine 135, and isoleucine 147–alanine 167.

The protein belongs to the PlsY family. Probably interacts with PlsX.

The protein localises to the cell inner membrane. It catalyses the reaction an acyl phosphate + sn-glycerol 3-phosphate = a 1-acyl-sn-glycero-3-phosphate + phosphate. Its pathway is lipid metabolism; phospholipid metabolism. Its function is as follows. Catalyzes the transfer of an acyl group from acyl-phosphate (acyl-PO(4)) to glycerol-3-phosphate (G3P) to form lysophosphatidic acid (LPA). This enzyme utilizes acyl-phosphate as fatty acyl donor, but not acyl-CoA or acyl-ACP. The protein is Glycerol-3-phosphate acyltransferase of Ehrlichia chaffeensis (strain ATCC CRL-10679 / Arkansas).